Reading from the N-terminus, the 464-residue chain is Probable glycine dehydrogenase (decarboxylating) subunit 1 (464 aa).

It belongs to the GcvP family. N-terminal subunit subfamily. In terms of assembly, the glycine cleavage system is composed of four proteins: P, T, L and H. In this organism, the P 'protein' is a heterodimer of two subunits.

The enzyme catalyses N(6)-[(R)-lipoyl]-L-lysyl-[glycine-cleavage complex H protein] + glycine + H(+) = N(6)-[(R)-S(8)-aminomethyldihydrolipoyl]-L-lysyl-[glycine-cleavage complex H protein] + CO2. Its function is as follows. The glycine cleavage system catalyzes the degradation of glycine. The P protein binds the alpha-amino group of glycine through its pyridoxal phosphate cofactor; CO(2) is released and the remaining methylamine moiety is then transferred to the lipoamide cofactor of the H protein. This chain is Probable glycine dehydrogenase (decarboxylating) subunit 1, found in Thiobacillus denitrificans (strain ATCC 25259 / T1).